A 504-amino-acid chain; its full sequence is Transcription factor NDT80 (504 aa).

3 disordered regions span residues 64–172 (MHFN…QHHM), 283–310 (NGFPPHHPSHPQNQPQNHPGHPHHNQHA), and 477–504 (RGRSPSSYHKDRTSGYRATNTPTPTPPQ). 4 stretches are compositionally biased toward low complexity: residues 73-87 (QQQQQQQQQQQQQQQ), 103-145 (QGPT…ARQP), 153-172 (QQAQNQDQADAQSQAQQHHM), and 292-301 (HPQNQPQNHP). Positions 160–488 (QADAQSQAQQ…RSPSSYHKDR (329 aa)) form a DNA-binding region, NDT80.

Its subcellular location is the nucleus. In terms of biological role, meiosis-specific transcription factor that binds to the middle sporulation element (MSE) of targeted genes corresponding to the consensus sequence 5'-ACACAAA-3'. Acts as an activator of CDR1 induction by antifungal drugs. Modulates azole sensitivity by controlling the expression of ergosterol biosynthesis genes. Required for hyphal growth in response to different filament-inducing cues and for the proper expression of genes characterizing the filamentous transcriptional program including noteworthy genes encoding cell wall components, such as HWP1, ECE1, RBT4, and ALS3. Is essential for the completion of cell separation through the direct transcriptional regulation of genes encoding the chitinase CHT3 and the cell wall glucosidase SUN41. Required for biofilm formation and plays a key role in microcolony formation under both flow and static conditions and to epithelial surfaces. Essential for virulence. This Candida albicans (strain SC5314 / ATCC MYA-2876) (Yeast) protein is Transcription factor NDT80.